A 413-amino-acid polypeptide reads, in one-letter code: Gamma-glutamyl phosphate reductase (413 aa).

This sequence belongs to the gamma-glutamyl phosphate reductase family.

The protein localises to the cytoplasm. The catalysed reaction is L-glutamate 5-semialdehyde + phosphate + NADP(+) = L-glutamyl 5-phosphate + NADPH + H(+). It participates in amino-acid biosynthesis; L-proline biosynthesis; L-glutamate 5-semialdehyde from L-glutamate: step 2/2. Functionally, catalyzes the NADPH-dependent reduction of L-glutamate 5-phosphate into L-glutamate 5-semialdehyde and phosphate. The product spontaneously undergoes cyclization to form 1-pyrroline-5-carboxylate. The sequence is that of Gamma-glutamyl phosphate reductase from Leuconostoc mesenteroides subsp. mesenteroides (strain ATCC 8293 / DSM 20343 / BCRC 11652 / CCM 1803 / JCM 6124 / NCDO 523 / NBRC 100496 / NCIMB 8023 / NCTC 12954 / NRRL B-1118 / 37Y).